Consider the following 176-residue polypeptide: Telomerase RNA component interacting RNase (176 aa).

Positions M1 to G12 are enriched in basic and acidic residues. Residues M1 to G121 form a disordered region. Residues S45–V56 are compositionally biased toward low complexity. Residues L68–E83 are compositionally biased toward basic and acidic residues. The span at R90 to G101 shows a compositional bias: low complexity. At K146 the chain carries N6-acetyllysine.

In terms of assembly, part of the telomerase RNA 3' end complex which contains about 488 proteins.

Zn(2+) inhibits the RNase activity while Mg(2+), Ca(2+), Mn(2+), K(+), Na(+), EDTA and EGTA show little effect on the exoribonuclease activity. Functionally, exoribonuclease that is part of the telomerase RNA 3' end processing complex and which has the ability to cleave all four unpaired RNA nucleotides from the 5' end or 3' end with higher efficiency for purine bases. This is Telomerase RNA component interacting RNase from Homo sapiens (Human).